A 512-amino-acid polypeptide reads, in one-letter code: Glutathione-binding protein GsiB (512 aa).

The N-terminal stretch at 1-26 (MTQFITHKWLAALGLASSIAAFPALA) is a signal peptide.

This sequence belongs to the bacterial solute-binding protein 5 family. The complex is composed of two ATP-binding proteins (GsiA), two transmembrane proteins (GsiC and GsiD) and a solute-binding protein (GsiB).

The protein resides in the periplasm. Part of the ABC transporter complex GsiABCD involved in glutathione import. Binds glutathione. This chain is Glutathione-binding protein GsiB, found in Salmonella typhimurium (strain LT2 / SGSC1412 / ATCC 700720).